Here is a 29-residue protein sequence, read N- to C-terminus: Histone H2B (29 aa).

A disordered region spans residues 1–29 (MPEPAKSAPKKGSTRTAAKGGKKRRKSRK). 2 positions are modified to N6-acetyllysine: Lys-6 and Lys-11. A Phosphoserine modification is found at Ser-13. Residues 20–29 (GGKKRRKSRK) show a composition bias toward basic residues.

This sequence belongs to the histone H2B family. As to quaternary structure, the nucleosome is a histone octamer containing two molecules each of H2A, H2B, H3 and H4 assembled in one H3-H4 heterotetramer and two H2A-H2B heterodimers. The octamer wraps approximately 147 bp of DNA. Monoubiquitination at the C-terminal Lys gives a specific tag for epigenetic transcriptional activation and is also prerequisite for histone H3 'Lys-4' and 'Lys-79' methylation. Post-translationally, phosphorylated during apoptosis; which facilitates apoptotic chromatin condensation.

It is found in the nucleus. It localises to the chromosome. Its function is as follows. Core component of nucleosome. Nucleosomes wrap and compact DNA into chromatin, limiting DNA accessibility to the cellular machineries which require DNA as a template. Histones thereby play a central role in transcription regulation, DNA repair, DNA replication and chromosomal stability. DNA accessibility is regulated via a complex set of post-translational modifications of histones, also called histone code, and nucleosome remodeling. The polypeptide is Histone H2B (Cyprinus carpio (Common carp)).